Here is a 187-residue protein sequence, read N- to C-terminus: MSDSNPGAANPALGPDADAAAGEGLELAQFAAGCFWSVELTYQRLPGVARTEVGYSQGHRHEPTYRDVCGGGTGHAEVVRVHYDPKACPYEVLLDVFWAKHNPTTLNRQGNDVGTQYRSGIYYYTAEQEKAARDSLAEKQKEWKERIVTEILPATRFYPAEEYHQRYLEKGGQSAKKSCNDPIRCYG.

The protein belongs to the MsrA Met sulfoxide reductase family.

It is found in the cytoplasm. Its subcellular location is the cytosol. The enzyme catalyses L-methionyl-[protein] + [thioredoxin]-disulfide + H2O = L-methionyl-(S)-S-oxide-[protein] + [thioredoxin]-dithiol. It carries out the reaction [thioredoxin]-disulfide + L-methionine + H2O = L-methionine (S)-S-oxide + [thioredoxin]-dithiol. Its function is as follows. Catalyzes the reduction of methionine sulfoxide (MetSO) to methionine in proteins. Plays a protective role against oxidative stress by restoring activity to proteins that have been inactivated by methionine oxidation. MSRA family specifically reduces the MetSO S-enantiomer. The protein is Peptide methionine sulfoxide reductase A2-1 (MSRA2-1) of Oryza sativa subsp. japonica (Rice).